The sequence spans 414 residues: Cytochrome b (414 aa).

A run of 2 helical transmembrane segments spans residues 40–60 (FFGS…VWLA) and 84–104 (GWLI…VIYL). His-91 and His-105 together coordinate heme b. The next 8 helical transmembrane spans lie at 121–141 (LLWM…FFGY), 154–174 (QVIV…SVWV), 188–208 (FFAF…LHIV), 252–272 (LMGV…NPTM), 294–314 (IAPV…PPMY), 317–337 (QFPG…LPWL), 351–371 (IFKW…WLGI), and 378–398 (YTLL…LMPI). Residues His-192 and His-206 each contribute to the heme b site.

This sequence belongs to the cytochrome b family. As to quaternary structure, the main subunits of complex b-c1 are: cytochrome b, cytochrome c1 and the Rieske protein. Heme b is required as a cofactor.

Its subcellular location is the cell membrane. Component of the ubiquinol-cytochrome c reductase complex (complex III or cytochrome b-c1 complex), which is a respiratory chain that generates an electrochemical potential coupled to ATP synthesis. The sequence is that of Cytochrome b (petB) from Allochromatium vinosum (strain ATCC 17899 / DSM 180 / NBRC 103801 / NCIMB 10441 / D) (Chromatium vinosum).